The sequence spans 391 residues: GTPase Obg (391 aa).

One can recognise an Obg domain in the interval 1-159 (MKFVDEARIL…RELMLELMLL (159 aa)). The OBG-type G domain occupies 160 to 333 (ADVGMLGMPN…LCWDIMEFMK (174 aa)). Residues 166 to 173 (GMPNAGKS), 191 to 195 (FTTLV), 213 to 216 (DIPG), 283 to 286 (NKVD), and 314 to 316 (SAI) contribute to the GTP site. Positions 173 and 193 each coordinate Mg(2+).

This sequence belongs to the TRAFAC class OBG-HflX-like GTPase superfamily. OBG GTPase family. As to quaternary structure, monomer. Mg(2+) is required as a cofactor.

It is found in the cytoplasm. Its function is as follows. An essential GTPase which binds GTP, GDP and possibly (p)ppGpp with moderate affinity, with high nucleotide exchange rates and a fairly low GTP hydrolysis rate. Plays a role in control of the cell cycle, stress response, ribosome biogenesis and in those bacteria that undergo differentiation, in morphogenesis control. The chain is GTPase Obg from Photorhabdus laumondii subsp. laumondii (strain DSM 15139 / CIP 105565 / TT01) (Photorhabdus luminescens subsp. laumondii).